Reading from the N-terminus, the 146-residue chain is Large ribosomal subunit protein uL15 (146 aa).

Residues M1–P65 are disordered. The span at R24–A34 shows a compositional bias: gly residues.

It belongs to the universal ribosomal protein uL15 family. Part of the 50S ribosomal subunit.

Functionally, binds to the 23S rRNA. The polypeptide is Large ribosomal subunit protein uL15 (Bordetella parapertussis (strain 12822 / ATCC BAA-587 / NCTC 13253)).